Here is an 878-residue protein sequence, read N- to C-terminus: Protein daughter of sevenless (878 aa).

The PH domain maps to 3–113 (RTFYEGWLIK…WVNCICQVCH (111 aa)). The interval 132–176 (ENRTQHTSSSGGLSNSTQNTTTTSLHSSAGTTAPQASVPNAGGSA) is disordered. Positions 136-159 (QHTSSSGGLSNSTQNTTTTSLHSS) are enriched in low complexity. The span at 160–169 (AGTTAPQASV) shows a compositional bias: polar residues. The stretch at 246 to 275 (ALIQAQAAAAAAEQLQQQQQQAARLAVSAN) forms a coiled coil. Residues 391–437 (NNNASKQRSDSDSESVFTDDDEWAHPLPLRENVDRSTRPSDSSIENE) are disordered. S399 is subject to Phosphoserine. At T481 the chain carries Phosphothreonine. Interaction with DRK stretches follow at residues 638 to 650 (DCPP…KPKV) and 690 to 702 (GPPS…KPNA). Disordered stretches follow at residues 686-721 (QQPI…SSGA) and 749-773 (LPRQ…RTAS). Composition is skewed to polar residues over residues 707–718 (NSATMSPATRRS) and 760–770 (SPGSMSVQHQR). T771 bears the Phosphothreonine mark. Residues Y801 and Y854 each carry the phosphotyrosine modification.

Interacts with DRK. In terms of processing, phosphorylated on Tyr-801 and Tyr-854 in response to sevenless activation, which initiates the recruitment of the phosphatase CSW.

Its subcellular location is the cytoplasm. The protein resides in the membrane. Functionally, essential component for signaling from various receptor tyrosine kinases such as Sevenless, TORSO and DER. Required for photoreceptor cell and wing development. This is Protein daughter of sevenless (dos) from Drosophila melanogaster (Fruit fly).